A 91-amino-acid polypeptide reads, in one-letter code: Small ribosomal subunit protein uS15 (91 aa).

The protein belongs to the universal ribosomal protein uS15 family. Part of the 30S ribosomal subunit. Forms a bridge to the 50S subunit in the 70S ribosome, contacting the 23S rRNA.

In terms of biological role, one of the primary rRNA binding proteins, it binds directly to 16S rRNA where it helps nucleate assembly of the platform of the 30S subunit by binding and bridging several RNA helices of the 16S rRNA. Its function is as follows. Forms an intersubunit bridge (bridge B4) with the 23S rRNA of the 50S subunit in the ribosome. This Rickettsia akari (strain Hartford) protein is Small ribosomal subunit protein uS15.